The sequence spans 364 residues: Medium-wave-sensitive opsin 1 (364 aa).

Over 1–52 (MAQRWGPHALSGVQAQDAYEDSTQASLFTYTNSNNTRGPFEGPNYHIAPRWV) the chain is Extracellular. Residues 17–43 (DAYEDSTQASLFTYTNSNNTRGPFEGP) form a required for 11-cis-retinal regeneration region. A glycan (N-linked (GlcNAc...) asparagine) is linked at Asn34. Residues 53 to 77 (YHLTSAWMTIVVIASIFTNGLVLVA) form a helical membrane-spanning segment. The Cytoplasmic portion of the chain corresponds to 78–89 (TMRFKKLRHPLN). Residues 90–115 (WILVNLAVADLAETVIASTISVVNQV) form a helical membrane-spanning segment. The Extracellular portion of the chain corresponds to 116 to 129 (YGYFVLGHPLCVVE). Residues Cys126 and Cys203 are joined by a disulfide bond. The chain crosses the membrane as a helical span at residues 130–149 (GYTVSLCGITGLWSLAIISW). The Cytoplasmic portion of the chain corresponds to 150–168 (ERWLVVCKPFGNVRFDAKL). The helical transmembrane segment at 169 to 192 (AIVGIVFSWVWSAVWTAPPIFGWS) threads the bilayer. Topologically, residues 193–218 (RYWPYGLKTSCGPDVFSGTSYPGVQS) are extracellular. The helical transmembrane segment at 219-246 (YMMVLMVTCCITPLSIIVLCYLHVWLAI) threads the bilayer. At 247–268 (RAVAKQQKESESTQKAEKEVTR) the chain is on the cytoplasmic side. Residues 269–292 (MVVVMVLAYCLCWGPYAFFACFAT) form a helical membrane-spanning segment. The Extracellular segment spans residues 293 to 300 (ANPGYSFH). The chain crosses the membrane as a helical span at residues 301 to 325 (PLVAALPAYFAKSATIYNPIIYVFM). Lys312 bears the N6-(retinylidene)lysine mark. The Cytoplasmic portion of the chain corresponds to 326-364 (NRQFRNCILQLFGKKVEDSSELSSTSRTEASSVSSVSPA).

This sequence belongs to the G-protein coupled receptor 1 family. Opsin subfamily. Monomer. Homodimer. Homotetramer. O-glycosylated. In terms of processing, phosphorylated on some or all of the serine and threonine residues present in the C-terminal region. As to expression, expressed in cone photoreceptor cells.

The protein localises to the membrane. Its function is as follows. Visual pigments are the light-absorbing molecules that mediate vision. They consist of an apoprotein, opsin, covalently linked to cis-retinal. May increase spectral sensitivity in dim light. This Cavia porcellus (Guinea pig) protein is Medium-wave-sensitive opsin 1 (OPN1MW).